We begin with the raw amino-acid sequence, 294 residues long: 4-hydroxy-tetrahydrodipicolinate synthase (294 aa).

A pyruvate-binding site is contributed by Thr-47. Tyr-136 (proton donor/acceptor) is an active-site residue. Lys-164 acts as the Schiff-base intermediate with substrate in catalysis. Val-206 provides a ligand contact to pyruvate.

It belongs to the DapA family. As to quaternary structure, homotetramer; dimer of dimers.

The protein localises to the cytoplasm. It catalyses the reaction L-aspartate 4-semialdehyde + pyruvate = (2S,4S)-4-hydroxy-2,3,4,5-tetrahydrodipicolinate + H2O + H(+). Its pathway is amino-acid biosynthesis; L-lysine biosynthesis via DAP pathway; (S)-tetrahydrodipicolinate from L-aspartate: step 3/4. Catalyzes the condensation of (S)-aspartate-beta-semialdehyde [(S)-ASA] and pyruvate to 4-hydroxy-tetrahydrodipicolinate (HTPA). This is 4-hydroxy-tetrahydrodipicolinate synthase from Cyanothece sp. (strain PCC 7425 / ATCC 29141).